A 500-amino-acid chain; its full sequence is NADH-quinone oxidoreductase subunit N (500 aa).

The next 14 membrane-spanning stretches (helical) occupy residues 6–26, 40–60, 69–89, 106–125, 129–151, 164–184, 207–227, 239–259, 276–296, 302–322, 337–357, 380–400, 417–437, and 464–484; these read SWIA…IALV, ALTL…ALGG, MVVV…ALMI, GGEF…VMIS, FLVL…ALRR, FVLG…LYGA, LVFG…AVPF, PTAV…AMTI, MLAL…VAQT, LAFS…AGVV, MFYA…ILLL, YAGV…LVGF, SYLV…FYYL, and IVLA…SSLM.

This sequence belongs to the complex I subunit 2 family. NDH-1 is composed of 14 different subunits. Subunits NuoA, H, J, K, L, M, N constitute the membrane sector of the complex.

The protein resides in the cell inner membrane. The catalysed reaction is a quinone + NADH + 5 H(+)(in) = a quinol + NAD(+) + 4 H(+)(out). In terms of biological role, NDH-1 shuttles electrons from NADH, via FMN and iron-sulfur (Fe-S) centers, to quinones in the respiratory chain. The immediate electron acceptor for the enzyme in this species is believed to be ubiquinone. Couples the redox reaction to proton translocation (for every two electrons transferred, four hydrogen ions are translocated across the cytoplasmic membrane), and thus conserves the redox energy in a proton gradient. The sequence is that of NADH-quinone oxidoreductase subunit N from Polaromonas naphthalenivorans (strain CJ2).